Reading from the N-terminus, the 239-residue chain is Myogenic factor 6 (239 aa).

The segment at 27–64 (QHLDMPGVSPLYDGNHSPLSPGPDNVPSETGGESSGDE) is disordered. A bHLH domain is found at 96–147 (DRRKAATLRERRRLKKINEAFDALKRKSVANPNQRLPKVEILRSAISYIERL). A disordered region spans residues 155 to 184 (DEQERGQSGASDTRNDKEQNRPSGGDYCWK).

As to quaternary structure, efficient DNA binding requires dimerization with another bHLH protein.

The protein localises to the nucleus. Its function is as follows. Involved in muscle differentiation (myogenic factor). Induces fibroblasts to differentiate into myoblasts. Probable sequence specific DNA-binding protein. The protein is Myogenic factor 6 (myf6) of Tetraodon nigroviridis (Spotted green pufferfish).